We begin with the raw amino-acid sequence, 520 residues long: Interferon lambda receptor 1 (520 aa).

Residues 1-20 (MAGPERWGPLLLCLLQAAPG) form the signal peptide. The Extracellular segment spans residues 21 to 228 (RPRLAPPQNV…LLEVPEANWA (208 aa)). The 101-residue stretch at 26–126 (PPQNVTLLSQ…LDYLFEVEPA (101 aa)) folds into the Fibronectin type-III domain. N-linked (GlcNAc...) asparagine glycosylation is found at asparagine 29 and asparagine 36. Intrachain disulfides connect cysteine 74-cysteine 82 and cysteine 86-cysteine 150. N-linked (GlcNAc...) asparagine glycans are attached at residues asparagine 142 and asparagine 169. Cysteine 195 and cysteine 217 are joined by a disulfide. Residues 229–249 (FLVLPSLLILLLVIAAGGVIW) form a helical membrane-spanning segment. The Cytoplasmic portion of the chain corresponds to 250 to 520 (KTLMGNPWFQ…GRTLGHYMAR (271 aa)). 2 disordered regions span residues 302-439 (VRPT…FLEE) and 477-520 (ESSP…YMAR). The span at 323-336 (AEDEEEEDEEDTED) shows a compositional bias: acidic residues. The span at 380 to 392 (SSAWDSSDRSWAS) shows a compositional bias: low complexity. Over residues 479–495 (SPEEEEEARESEIEDSD) the composition is skewed to acidic residues.

It belongs to the type II cytokine receptor family. In terms of assembly, heterodimer with IL10RB. Post-translationally, ubiquitinated by FBXO45-containing E3 ligase leading to proteasomal degradation. In terms of tissue distribution, widely expressed.

It localises to the membrane. Functionally, the IFNLR1/IL10RB dimer is a receptor for the cytokine ligands IFNL2 and IFNL3 and mediates their antiviral activity. The ligand/receptor complex stimulate the activation of the JAK/STAT signaling pathway leading to the expression of IFN-stimulated genes (ISG), which contribute to the antiviral state. Determines the cell type specificity of the lambda interferon action. Shows a more restricted pattern of expression in the epithelial tissues thereby limiting responses to lambda interferons primarily to epithelial cells of the respiratory, gastrointestinal, and reproductive tracts. Seems not to be essential for early virus-activated host defense in vaginal infection, but plays an important role in Toll-like receptor (TLR)-induced antiviral defense. Plays a significant role in the antiviral immune defense in the intestinal epithelium. This is Interferon lambda receptor 1 (IFNLR1) from Homo sapiens (Human).